Consider the following 123-residue polypeptide: Non-specific lipid-transfer protein 3 (123 aa).

The signal sequence occupies residues 1–25 (MASSGQLLKLVCLVAVMCCMAVGGP). 4 cysteine pairs are disulfide-bonded: Cys33–Cys80, Cys43–Cys57, Cys58–Cys105, and Cys78–Cys119.

It belongs to the plant LTP family.

In terms of biological role, plant non-specific lipid-transfer proteins transfer phospholipids as well as galactolipids across membranes. May play a role in wax or cutin deposition in the cell walls of expanding epidermal cells and certain secretory tissues. The sequence is that of Non-specific lipid-transfer protein 3 from Prunus dulcis (Almond).